A 196-amino-acid chain; its full sequence is V-type proton ATPase subunit E (196 aa).

Belongs to the V-ATPase E subunit family.

Its function is as follows. Produces ATP from ADP in the presence of a proton gradient across the membrane. The chain is V-type proton ATPase subunit E from Clostridium botulinum (strain Eklund 17B / Type B).